The chain runs to 211 residues: Dephospho-CoA kinase (211 aa).

The 204-residue stretch at 3-206 folds into the DPCK domain; that stretch reads VLGLTGGIGS…PGMKGPDPHA (204 aa). 11–16 contacts ATP; that stretch reads GSGKSI.

This sequence belongs to the CoaE family.

It localises to the cytoplasm. The catalysed reaction is 3'-dephospho-CoA + ATP = ADP + CoA + H(+). The protein operates within cofactor biosynthesis; coenzyme A biosynthesis; CoA from (R)-pantothenate: step 5/5. Its function is as follows. Catalyzes the phosphorylation of the 3'-hydroxyl group of dephosphocoenzyme A to form coenzyme A. In Syntrophotalea carbinolica (strain DSM 2380 / NBRC 103641 / GraBd1) (Pelobacter carbinolicus), this protein is Dephospho-CoA kinase.